Reading from the N-terminus, the 1288-residue chain is CLIP-associating protein 2 (1288 aa).

The interval 1 to 62 is disordered; it reads MALSLSQDRS…AAKSGASKEG (62 aa). Low complexity-rich tracts occupy residues 19–32 and 40–62; these read GSRPSSAQAAFKVP and ESASSSRRPSATGAAKSGASKEG. The TOG 1 stretch occupies residues 62–312; sequence GAGAVDEEDF…RTLQSCLKSS (251 aa). HEAT repeat units lie at residues 174–209, 210–246, and 251–288; these read HGAEGIVPVLFNLIPNCAKVMATSGTAAIRIIIRHT, HVPRLIPLIASNCTSKSVAVRRRCYEFLDLLLQEWQT, and RHAAVLVESIKKGIRDADAEARVEARKAYWGLRAHFPG. 2 disordered regions span residues 314–571 and 614–634; these read SVAS…SSRL and ANSDASSACSERSYSSRNGSI. 2 stretches are compositionally biased toward low complexity: residues 317-337 and 347-358; these read SLPQSDRSSSSSQESLNRPLS and PAGSKSSGSPAS. 2 stretches are compositionally biased toward polar residues: residues 406–421 and 468–478; these read KQTLSTASSVGSSQVD and TALSTLSTGAQ. The short motif at 490–493 is the SXIP motif 1 element; it reads SRIP. Positions 496-518 are enriched in polar residues; sequence QGCSRDSSPTRLSVAPSNISHIY. The short motif at 527-530 is the SXIP motif 2 element; sequence SRIP. The segment covering 616 to 630 has biased composition (low complexity); that stretch reads SDASSACSERSYSSR. A TOG 2 region spans residues 638 to 889; it reads MRQTEDVAEV…TKLLQNHLRN (252 aa). HEAT repeat units lie at residues 718 to 755 and 780 to 817; these read RVFSMFLETLVDFIAVHKEDLQDWLFVLLTQLLKKMGA and LQFTILMRFTVDQTQTPNLKVKVAILKYIETLTLQMEP. Polar residues predominate over residues 891–900; sequence GNTAQASIGS. Disordered stretches follow at residues 891–936 and 960–1047; these read GNTA…FDYD and SVRS…DSGV. The segment covering 912–931 has biased composition (low complexity); it reads SWSSPLTSPTNTSQNTPSPS. The segment covering 963–977 has biased composition (basic and acidic residues); it reads SQEDMTEPPRKREGD. Positions 1019–1030 are enriched in low complexity; sequence SDSSFGSSSFNK. Acidic residues predominate over residues 1036–1046; that stretch reads DQEESLTDDSG. HEAT repeat units follow at residues 1047–1086, 1091–1128, 1167–1204, and 1209–1246; these read VDQSEVVAELLKELSNHSERVEERKAALCELMRLIRETQL, EHFKTILLLLLETLGDGEHVIRALALRVLKEILNRQPW, ISPDQCIKVLCPIIQSADYPINLAAIKMLTKVIDRLPK, and QMLPEIVPGLIQGYDNSESSVRKACVFCLVAIYAVIGE.

The protein belongs to the CLASP family. Interacts with microtubules.

The protein resides in the cytoplasm. It is found in the cytoskeleton. It localises to the microtubule organizing center. Its subcellular location is the centrosome. The protein localises to the chromosome. The protein resides in the centromere. It is found in the kinetochore. It localises to the spindle. Its subcellular location is the golgi apparatus. The protein localises to the trans-Golgi network. The protein resides in the cell membrane. It is found in the cell projection. It localises to the ruffle membrane. Functionally, microtubule plus-end tracking protein that promotes the stabilization of dynamic microtubules. Involved in the nucleation of noncentrosomal microtubules originating from the trans-Golgi network (TGN). Required for the polarization of the cytoplasmic microtubule arrays in migrating cells towards the leading edge of the cell. May act at the cell cortex to enhance the frequency of rescue of depolymerizing microtubules. This cortical microtubule stabilizing activity is regulated at least in part by phosphatidylinositol 3-kinase signaling. Also performs a similar stabilizing function at the kinetochore which is essential for the bipolar alignment of chromosomes on the mitotic spindle. The sequence is that of CLIP-associating protein 2 (clasp2) from Danio rerio (Zebrafish).